The primary structure comprises 313 residues: Homeobox protein CDX-2 (313 aa).

A Phosphoserine modification is found at serine 60. The segment at 113-153 (HAHHHPHHHPHHPAAAPSCASGLLQTLNPGPPGPAATGAAE) is disordered. Basic residues predominate over residues 114 to 124 (AHHHPHHHPHH). Residues 185–215 (KDKYRVVYTDHQRLELEKEFHYSRYITIRRK) form an interaction with DNA region. Residues 185–244 (KDKYRVVYTDHQRLELEKEFHYSRYITIRRKAELAATLGLSERQVKIWFQNRRAKERKIN) constitute a DNA-binding region (homeobox). Positions 227-241 (RQVKIWFQNRRAKER) are interaction with 5-mCpG DNA. The disordered stretch occupies residues 242-313 (KINKKKLQQQ…GGVLNPTVTQ (72 aa)). 2 stretches are compositionally biased toward low complexity: residues 249-261 (QQQQ…QQLA) and 271-300 (QPGS…PGVL). Serine 283 is subject to Phosphoserine. The short motif at 283–295 (SPVSSLQGSVPGS) is the 4S motif; modulates transactivation activity and protein stability element.

This sequence belongs to the Caudal homeobox family. Can bind DNA as a monomer or homodimer. In terms of processing, ubiquitinated, leading to its degradation by the proteasome. Phosphorylation at Ser-60 reduces transactivation capacity. Phosphorylation at Ser-283 reduces transactivation capacity and also increases ubiquitin-dependent proteasome degradation. As to expression, expressed in the intestine.

Its subcellular location is the nucleus. Functionally, transcription factor which regulates the transcription of multiple genes expressed in the intestinal epithelium. Binds to the promoter of the intestinal sucrase-isomaltase SI and activates SI transcription. Binds to the DNA sequence 5'-ATAAAAACTTAT-3' in the promoter region of VDR and activates VDR transcription. Binds to and activates transcription of LPH. Activates transcription of CLDN2 and intestinal mucin MUC2. Binds to the 5'-AATTTTTTACAACACCT-3' DNA sequence in the promoter region of CA1 and activates CA1 transcription. Important in broad range of functions from early differentiation to maintenance of the intestinal epithelial lining of both the small and large intestine. Binds preferentially to methylated DNA. The polypeptide is Homeobox protein CDX-2 (CDX2) (Mesocricetus auratus (Golden hamster)).